A 588-amino-acid chain; its full sequence is BTB/POZ domain-containing protein At3g26490 (588 aa).

One can recognise a BTB domain in the interval 28–99; sequence NDLVIQVKST…CYGITITLCA (72 aa). The NPH3 domain maps to 218 to 507; sequence RWWGEDLAEL…VQILFVEQAR (290 aa). Residues S376 and S378 each carry the phosphoserine modification. Y448 is subject to Phosphotyrosine. Residues 529–554 are disordered; the sequence is FTTRREEGGQEEEERDETKPSGGFLQ.

Belongs to the NPH3 family.

Its pathway is protein modification; protein ubiquitination. May act as a substrate-specific adapter of an E3 ubiquitin-protein ligase complex (CUL3-RBX1-BTB) which mediates the ubiquitination and subsequent proteasomal degradation of target proteins. This chain is BTB/POZ domain-containing protein At3g26490, found in Arabidopsis thaliana (Mouse-ear cress).